A 618-amino-acid polypeptide reads, in one-letter code: UvrABC system protein C (618 aa).

Residues 19–97 (SEPGIYRMLD…IKALRPKYNV (79 aa)) form the GIY-YIG domain. Positions 208-243 (QIILDELAERMKNAVSQLNFEEAAVLRDQIKNLRLI) constitute a UVR domain.

The protein belongs to the UvrC family. Interacts with UvrB in an incision complex.

Its subcellular location is the cytoplasm. The UvrABC repair system catalyzes the recognition and processing of DNA lesions. UvrC both incises the 5' and 3' sides of the lesion. The N-terminal half is responsible for the 3' incision and the C-terminal half is responsible for the 5' incision. In Legionella pneumophila (strain Lens), this protein is UvrABC system protein C.